A 286-amino-acid polypeptide reads, in one-letter code: UPF0173 metal-dependent hydrolase RALTA_A1748 (286 aa).

The protein belongs to the UPF0173 family.

This is UPF0173 metal-dependent hydrolase RALTA_A1748 from Cupriavidus taiwanensis (strain DSM 17343 / BCRC 17206 / CCUG 44338 / CIP 107171 / LMG 19424 / R1) (Ralstonia taiwanensis (strain LMG 19424)).